The chain runs to 249 residues: Mediator of RNA polymerase II transcription subunit 19 (249 aa).

Disordered stretches follow at residues 1-68 (MEGF…SSRR) and 178-249 (QPPK…SGLR). Over residues 9–18 (AASEPSSIPS) the composition is skewed to low complexity. Residues 45 to 56 (VPGPPLPIPPPL) are compositionally biased toward pro residues. Composition is skewed to basic residues over residues 179-190 (PPKKKNKKHKQS) and 221-233 (RRKK…KKSR).

It belongs to the Mediator complex subunit 19 family. As to quaternary structure, component of the Mediator complex.

The protein resides in the nucleus. In terms of biological role, component of the Mediator complex, a coactivator involved in the regulated transcription of nearly all RNA polymerase II-dependent genes. Mediator functions as a bridge to convey information from gene-specific regulatory proteins to the basal RNA polymerase II transcription machinery. Mediator is recruited to promoters by direct interactions with regulatory proteins and serves as a scaffold for the assembly of a functional preinitiation complex with RNA polymerase II and the general transcription factors. This is Mediator of RNA polymerase II transcription subunit 19 (med19) from Xenopus tropicalis (Western clawed frog).